We begin with the raw amino-acid sequence, 393 residues long: S-adenosylmethionine synthase (393 aa).

Glutamate 9 provides a ligand contact to Mg(2+). Histidine 15 is a binding site for ATP. Residue aspartate 17 participates in Mg(2+) binding. A K(+)-binding site is contributed by glutamate 43. Positions 56 and 99 each coordinate L-methionine. Residues 167 to 169, 235 to 238, aspartate 246, 252 to 253, alanine 269, lysine 273, and lysine 277 each bind ATP; these read DGK, SGRF, and RK. Aspartate 246 serves as a coordination point for L-methionine. Lysine 277 is an L-methionine binding site.

The protein belongs to the AdoMet synthase family. In terms of assembly, homotetramer; dimer of dimers. The cofactor is Mn(2+). Requires Mg(2+) as cofactor. Co(2+) serves as cofactor. K(+) is required as a cofactor.

The protein localises to the cytoplasm. The catalysed reaction is L-methionine + ATP + H2O = S-adenosyl-L-methionine + phosphate + diphosphate. It functions in the pathway amino-acid biosynthesis; S-adenosyl-L-methionine biosynthesis; S-adenosyl-L-methionine from L-methionine: step 1/1. With respect to regulation, increased activity in the presence of 25 percent acetonitrile, methanol or dimethylformamide. In terms of biological role, catalyzes the formation of S-adenosylmethionine from methionine and ATP. In Acacia koa (Koa tree), this protein is S-adenosylmethionine synthase.